Consider the following 542-residue polypeptide: Membrane protein insertase YidC (542 aa).

The helical transmembrane segment at Asn6–Asp26 threads the bilayer. Residues Val32–Pro41 show a composition bias toward polar residues. The segment at Val32 to Ser57 is disordered. The next 5 membrane-spanning stretches (helical) occupy residues Leu326–Phe346, Phe350–Tyr370, Gly421–Leu441, Leu458–Met478, and Val501–Gly521.

This sequence belongs to the OXA1/ALB3/YidC family. Type 1 subfamily. In terms of assembly, interacts with the Sec translocase complex via SecD. Specifically interacts with transmembrane segments of nascent integral membrane proteins during membrane integration.

The protein resides in the cell inner membrane. Functionally, required for the insertion and/or proper folding and/or complex formation of integral membrane proteins into the membrane. Involved in integration of membrane proteins that insert both dependently and independently of the Sec translocase complex, as well as at least some lipoproteins. Aids folding of multispanning membrane proteins. The sequence is that of Membrane protein insertase YidC from Shewanella piezotolerans (strain WP3 / JCM 13877).